The chain runs to 289 residues: Bifunctional aminodeoxychorismate lyase / D-amino acid transaminase (289 aa).

Arg50 provides a ligand contact to pyridoxal 5'-phosphate. At Lys149 the chain carries N6-(pyridoxal phosphate)lysine. Tyr153, Thr216, and Thr217 together coordinate pyridoxal 5'-phosphate. Ser252 contacts 2-oxoglutarate. Position 253 (Ser253) interacts with pyridoxal 5'-phosphate. 2 residues coordinate 2-oxoglutarate: Met254 and Thr255.

This sequence belongs to the class-IV pyridoxal-phosphate-dependent aminotransferase family. In terms of assembly, homodimer. Pyridoxal 5'-phosphate is required as a cofactor.

It carries out the reaction 4-amino-4-deoxychorismate = 4-aminobenzoate + pyruvate + H(+). The enzyme catalyses D-alanine + 2-oxoglutarate = D-glutamate + pyruvate. The protein operates within cofactor biosynthesis; tetrahydrofolate biosynthesis; 4-aminobenzoate from chorismate: step 2/2. It participates in cell wall biogenesis; peptidoglycan biosynthesis. In terms of biological role, bifunctional enzyme that catalyzes two enzymatic reactions in biochemically unrelated pathways: acts as an aminodeoxychorismate (ADC) lyase (ADCL) in folate biosynthesis, converting 4-amino-4-deoxychorismate (ADC) to 4-aminobenzoate (PABA), and as a D-amino acid transaminase (DAAT) in peptidoglycan (PG) biosynthesis. DAAT activity is strictly restricted to D-alanine and D-glutamate. May function as a metabolic toggle that alternates between ADCL and DAAT activity, prioritizing the former over the latter in response to substrate accumulation. Bifunctionality of this enzyme provides a failsafe mechanism for a metabolic coupling between nucleic acid and cell wall biosynthesis that appears to ensure prioritization of PABA production over D-alanine/D-glutamate biosynthesis. This Mycobacterium tuberculosis (strain ATCC 25618 / H37Rv) protein is Bifunctional aminodeoxychorismate lyase / D-amino acid transaminase.